Consider the following 452-residue polypeptide: Probable glycine dehydrogenase (decarboxylating) subunit 1 (452 aa).

The protein belongs to the GcvP family. N-terminal subunit subfamily. As to quaternary structure, the glycine cleavage system is composed of four proteins: P, T, L and H. In this organism, the P 'protein' is a heterodimer of two subunits.

It catalyses the reaction N(6)-[(R)-lipoyl]-L-lysyl-[glycine-cleavage complex H protein] + glycine + H(+) = N(6)-[(R)-S(8)-aminomethyldihydrolipoyl]-L-lysyl-[glycine-cleavage complex H protein] + CO2. Functionally, the glycine cleavage system catalyzes the degradation of glycine. The P protein binds the alpha-amino group of glycine through its pyridoxal phosphate cofactor; CO(2) is released and the remaining methylamine moiety is then transferred to the lipoamide cofactor of the H protein. The protein is Probable glycine dehydrogenase (decarboxylating) subunit 1 of Sphingopyxis alaskensis (strain DSM 13593 / LMG 18877 / RB2256) (Sphingomonas alaskensis).